We begin with the raw amino-acid sequence, 634 residues long: Phototropic-responsive NPH3 family protein NPY2 (634 aa).

The region spanning 29-97 (SDISVDVEGS…CYGMTVTLSA (69 aa)) is the BTB domain. One can recognise an NPH3 domain in the interval 207 to 488 (DWWVEDLCEL…VQVLFFEQVR (282 aa)). At tyrosine 429 the chain carries Phosphotyrosine. 2 disordered regions span residues 492 to 517 (SSGSSTPDLPRGMGRELRSCGTYGSS) and 584 to 634 (QLQS…VSVS). Residues 588 to 602 (KGGGEKNNGGGGGGS) are compositionally biased toward gly residues. A compositionally biased stretch (polar residues) spans 619–634 (KTATPSRNLTRRVSVS).

It belongs to the NPH3 family. As to expression, specifically expressed in the hypophysis and the root meristems in the embryos. Highly expressed in primary root tips and radicles.

It is found in the cell membrane. The protein resides in the cytoplasm. Its subcellular location is the cytosol. Its pathway is protein modification; protein ubiquitination. Functionally, may act as a substrate-specific adapter of an E3 ubiquitin-protein ligase complex (CUL3-RBX1-BTB) which mediates the ubiquitination and subsequent proteasomal degradation of target proteins. Plays an essential role in auxin-mediated organogenesis and in root gravitropic responses through the control of PIN proteins (e.g. PIN1 and PIN2) polarity in the root tip endodermal cell layer and in shoot epidermis. Recruited to the plasma membrane by PINs (e.g. PIN1 and PIN2) and, in concert with AGC kinases-mediated (e.g. D6PK and PID) PINs phosphorylation, maintains their polarity through limiting lateral diffusion-based escape. This Arabidopsis thaliana (Mouse-ear cress) protein is Phototropic-responsive NPH3 family protein NPY2.